A 948-amino-acid polypeptide reads, in one-letter code: Coiled-coil domain-containing protein 66 (948 aa).

2 positions are modified to phosphothreonine: Thr-115 and Thr-121. Ser-369 carries the phosphoserine modification. Positions 458-499 are disordered; the sequence is DRRRQKQLEHQKAITAQVEEKRRKKQLEEEQRKKEEQEEELR. A coiled-coil region spans residues 467–558; it reads HQKAITAQVE…EQRIRELAQK (92 aa). The segment at 570–948 is mediates localization to cilia, centrosomes and spindle microtubules and the interaction with PCM1, CEP290, CEP104 and CSPP1; sequence GVDTIQMEYN…NQEESFGSSF (379 aa). The residue at position 606 (Ser-606) is a Phosphoserine. Disordered stretches follow at residues 690–713 and 788–808; these read QTKH…KRYI and SFSK…RTQQ.

In terms of assembly, homodimer; disulfide-linked. Interacts with CEP290. Interacts with PCM1. Interacts with ARMC9, TOGARAM1, CSPP1 and CEP104. Interacts with CDK5RAP2, CEP152, CEP192, TBG1 and PRC1. Widely expressed (at protein level). Expressed in retina, mainly in photoreceptors but also in outer plexiform and ganglion cell layers (at protein level).

Its subcellular location is the cytoplasm. The protein resides in the cytoskeleton. It is found in the microtubule organizing center. It localises to the centrosome. The protein localises to the centriolar satellite. Its subcellular location is the cell projection. The protein resides in the cilium. It is found in the cilium basal body. It localises to the cilium axoneme. The protein localises to the photoreceptor inner segment. Its subcellular location is the photoreceptor outer segment. The protein resides in the spindle. It is found in the midbody. Its function is as follows. Microtubule-binding protein required for ciliogenesis. May function in ciliogenesis by mediating the transport of proteins like BBS4 to the cilium, but also through the organization of the centriolar satellites. Required for the assembly of signaling-competent cilia with proper structure and length. Mediates this function in part by regulating transition zone assembly and basal body recruitment of the IFT-B complex. Cooperates with the ciliopathy proteins CSPP1 and CEP104 during cilium length regulation. Plays two important roles during cell division. First, is required for mitotic progression via regulation of spindle assembly, organization and orientation, levels of spindle microtubules (MTs), kinetochore-fiber integrity, and chromosome alignment. Second, functions during cytokinesis in part by regulating assembly and organization of central spindle and midbody MTs. Plays a role in retina morphogenesis and/or homeostasis. In Homo sapiens (Human), this protein is Coiled-coil domain-containing protein 66.